Here is a 173-residue protein sequence, read N- to C-terminus: Ribulose bisphosphate carboxylase small subunit, chloroplastic 1 (173 aa).

The transit peptide at 1 to 49 (MASIPATVATVAQANMVAPFTGLKANAAFPVTKKVNDFSTLPSNGGRVQ) directs the protein to the chloroplast.

This sequence belongs to the RuBisCO small chain family. In terms of assembly, heterohexadecamer of 8 large and 8 small subunits.

The protein resides in the plastid. Its subcellular location is the chloroplast. RuBisCO catalyzes two reactions: the carboxylation of D-ribulose 1,5-bisphosphate, the primary event in carbon dioxide fixation, as well as the oxidative fragmentation of the pentose substrate. Both reactions occur simultaneously and in competition at the same active site. Although the small subunit is not catalytic it is essential for maximal activity. The sequence is that of Ribulose bisphosphate carboxylase small subunit, chloroplastic 1 from Flaveria pringlei.